The chain runs to 956 residues: Isoleucine--tRNA ligase (956 aa).

Positions Pro-60 to His-70 match the 'HIGH' region motif. An L-isoleucyl-5'-AMP-binding site is contributed by Glu-583. The 'KMSKS' region signature appears at Lys-624 to Ser-628. Lys-627 lines the ATP pocket. Zn(2+) is bound by residues Cys-921, Cys-924, Cys-938, and Cys-941.

It belongs to the class-I aminoacyl-tRNA synthetase family. IleS type 1 subfamily. In terms of assembly, monomer. Zn(2+) is required as a cofactor.

It is found in the cytoplasm. The enzyme catalyses tRNA(Ile) + L-isoleucine + ATP = L-isoleucyl-tRNA(Ile) + AMP + diphosphate. Catalyzes the attachment of isoleucine to tRNA(Ile). As IleRS can inadvertently accommodate and process structurally similar amino acids such as valine, to avoid such errors it has two additional distinct tRNA(Ile)-dependent editing activities. One activity is designated as 'pretransfer' editing and involves the hydrolysis of activated Val-AMP. The other activity is designated 'posttransfer' editing and involves deacylation of mischarged Val-tRNA(Ile). The polypeptide is Isoleucine--tRNA ligase (Aquifex aeolicus (strain VF5)).